Here is a 122-residue protein sequence, read N- to C-terminus: Large ribosomal subunit protein uL18 (122 aa).

This sequence belongs to the universal ribosomal protein uL18 family. Part of the 50S ribosomal subunit; part of the 5S rRNA/L5/L18/L25 subcomplex. Contacts the 5S and 23S rRNAs.

This is one of the proteins that bind and probably mediate the attachment of the 5S RNA into the large ribosomal subunit, where it forms part of the central protuberance. The protein is Large ribosomal subunit protein uL18 of Mycobacterium ulcerans (strain Agy99).